Here is a 100-residue protein sequence, read N- to C-terminus: Spleen trypsin inhibitor I (100 aa).

A signal peptide spans 1-21 (MKMSRLCLSIALLVLLGTLAA). Positions 22–33 (STPGCDTSNQAK) are excised as a propeptide. Residues 40–90 (CLEPPYTGPCKAKMIRYFYNAKAGFCETFVYGGCKAKSNNFRSAEDCMRTC) form the BPTI/Kunitz inhibitor domain. 3 cysteine pairs are disulfide-bonded: Cys-40–Cys-90, Cys-49–Cys-73, and Cys-65–Cys-86. Leu-100 is a propeptide.

The protein resides in the secreted. The polypeptide is Spleen trypsin inhibitor I (Bos taurus (Bovine)).